We begin with the raw amino-acid sequence, 171 residues long: Shikimate kinase (171 aa).

14–19 (GAGKST) lines the ATP pocket. Position 18 (Ser18) interacts with Mg(2+). Residues Asp36, Arg60, and Gly82 each contribute to the substrate site. Arg120 serves as a coordination point for ATP. Residue Arg139 coordinates substrate. Gln156 is an ATP binding site.

It belongs to the shikimate kinase family. Monomer. The cofactor is Mg(2+).

The protein localises to the cytoplasm. The catalysed reaction is shikimate + ATP = 3-phosphoshikimate + ADP + H(+). It participates in metabolic intermediate biosynthesis; chorismate biosynthesis; chorismate from D-erythrose 4-phosphate and phosphoenolpyruvate: step 5/7. In terms of biological role, catalyzes the specific phosphorylation of the 3-hydroxyl group of shikimic acid using ATP as a cosubstrate. This chain is Shikimate kinase, found in Shewanella loihica (strain ATCC BAA-1088 / PV-4).